The primary structure comprises 581 residues: DNA primase (581 aa).

Residues 40 to 64 form a CHC2-type zinc finger; that stretch reads CPFHNEKTPSFTVNGEKQFYHCFGC. The region spanning 259-341 is the Toprim domain; it reads NRLLVVEGYM…GRQLRFMFLP (83 aa). The Mg(2+) site is built by Glu265, Asp309, and Asp311.

It belongs to the DnaG primase family. Monomer. Interacts with DnaB. Requires Zn(2+) as cofactor. The cofactor is Mg(2+).

The enzyme catalyses ssDNA + n NTP = ssDNA/pppN(pN)n-1 hybrid + (n-1) diphosphate.. RNA polymerase that catalyzes the synthesis of short RNA molecules used as primers for DNA polymerase during DNA replication. This is DNA primase from Escherichia coli O6:H1 (strain CFT073 / ATCC 700928 / UPEC).